The following is a 406-amino-acid chain: Acetylornithine aminotransferase (406 aa).

Residues 113-114 (GT) and F145 each bind pyridoxal 5'-phosphate. R148 is a binding site for N(2)-acetyl-L-ornithine. 233 to 236 (DEIQ) lines the pyridoxal 5'-phosphate pocket. K262 carries the N6-(pyridoxal phosphate)lysine modification. S290 is a binding site for N(2)-acetyl-L-ornithine. A pyridoxal 5'-phosphate-binding site is contributed by T291.

This sequence belongs to the class-III pyridoxal-phosphate-dependent aminotransferase family. ArgD subfamily. In terms of assembly, homodimer. Pyridoxal 5'-phosphate serves as cofactor.

It is found in the cytoplasm. It catalyses the reaction N(2)-acetyl-L-ornithine + 2-oxoglutarate = N-acetyl-L-glutamate 5-semialdehyde + L-glutamate. Its pathway is amino-acid biosynthesis; L-arginine biosynthesis; N(2)-acetyl-L-ornithine from L-glutamate: step 4/4. The chain is Acetylornithine aminotransferase from Leptospira interrogans serogroup Icterohaemorrhagiae serovar Lai (strain 56601).